Consider the following 351-residue polypeptide: Histidinol-phosphate aminotransferase (351 aa).

The segment at Met1–Arg26 is disordered. The residue at position 223 (Lys223) is an N6-(pyridoxal phosphate)lysine.

Belongs to the class-II pyridoxal-phosphate-dependent aminotransferase family. Histidinol-phosphate aminotransferase subfamily. As to quaternary structure, homodimer. Requires pyridoxal 5'-phosphate as cofactor.

The enzyme catalyses L-histidinol phosphate + 2-oxoglutarate = 3-(imidazol-4-yl)-2-oxopropyl phosphate + L-glutamate. Its pathway is amino-acid biosynthesis; L-histidine biosynthesis; L-histidine from 5-phospho-alpha-D-ribose 1-diphosphate: step 7/9. The protein is Histidinol-phosphate aminotransferase of Rubrobacter xylanophilus (strain DSM 9941 / JCM 11954 / NBRC 16129 / PRD-1).